The primary structure comprises 72 residues: Toxin Acra II-1 (72 aa).

Positions 3 to 67 constitute an LCN-type CS-alpha/beta domain; the sequence is VPGNYPLNTY…VWNAAKNYCK (65 aa). Cystine bridges form between Cys18/Cys41, Cys27/Cys46, and Cys31/Cys48.

It belongs to the long (3 C-C) scorpion toxin superfamily. Sodium channel inhibitor family. Beta subfamily. As to expression, expressed by the venom gland.

It is found in the secreted. In terms of biological role, binds to sodium channels (Nav) and affects the channel activation process. The chain is Toxin Acra II-1 from Androctonus crassicauda (Arabian fat-tailed scorpion).